The primary structure comprises 315 residues: Aspartate carbamoyltransferase catalytic subunit (315 aa).

R64 and T65 together coordinate carbamoyl phosphate. K92 is a binding site for L-aspartate. Carbamoyl phosphate-binding residues include R114, H142, and Q145. 2 residues coordinate L-aspartate: R175 and R229. 2 residues coordinate carbamoyl phosphate: G270 and P271.

It belongs to the aspartate/ornithine carbamoyltransferase superfamily. ATCase family. In terms of assembly, heterododecamer (2C3:3R2) of six catalytic PyrB chains organized as two trimers (C3), and six regulatory PyrI chains organized as three dimers (R2).

It catalyses the reaction carbamoyl phosphate + L-aspartate = N-carbamoyl-L-aspartate + phosphate + H(+). The protein operates within pyrimidine metabolism; UMP biosynthesis via de novo pathway; (S)-dihydroorotate from bicarbonate: step 2/3. Functionally, catalyzes the condensation of carbamoyl phosphate and aspartate to form carbamoyl aspartate and inorganic phosphate, the committed step in the de novo pyrimidine nucleotide biosynthesis pathway. The polypeptide is Aspartate carbamoyltransferase catalytic subunit (Methylorubrum extorquens (strain CM4 / NCIMB 13688) (Methylobacterium extorquens)).